The chain runs to 318 residues: Geranylfarnesyl diphosphate synthase (318 aa).

The isopentenyl diphosphate site is built by Lys31, Arg34, and His65. Positions 72 and 76 each coordinate Mg(2+). Arg81 contacts an all-trans-polyprenyl diphosphate. Arg82 is a binding site for isopentenyl diphosphate. An all-trans-polyprenyl diphosphate is bound by residues Lys166, Thr167, and Gln204.

The protein belongs to the FPP/GGPP synthase family. In terms of assembly, homodimer. Requires Mg(2+) as cofactor.

The catalysed reaction is isopentenyl diphosphate + (2E,6E,10E)-geranylgeranyl diphosphate = (2E,6E,10E,14E)-geranylfarnesyl diphosphate + diphosphate. Functionally, probably involved in biosynthesis of the precursor for C25 (sesterterpanyl chain) moiety of C25-C25 diether (2,3-di-O-sesterterpanyl-sn-glycero) membrane lipid. Catalyzes the condensation of isopentenyl pyrophosphate with the allylic pyrophosphates to yield all-trans geranylfarnesyl diphosphate (GFPP). Geranylgeranyl diphosphate (GGPP) is the preferred substrate, however methylallyl diphosphate (DMAPP), farnesyl diphosphate (FPP) and geranyl diphosphate (GPP) can also be used as allylic substrate. This chain is Geranylfarnesyl diphosphate synthase (fgs), found in Aeropyrum pernix.